The sequence spans 162 residues: F protein (162 aa).

The segment at methionine 1–serine 23 is disordered. The span at asparagine 13 to serine 23 shows a compositional bias: polar residues.

Its subcellular location is the host cytoplasm. The protein resides in the host perinuclear region. This chain is F protein, found in Hepatitis C virus genotype 1a (isolate 1) (HCV).